The sequence spans 227 residues: Phosphoglycolate phosphatase (227 aa).

Asp13 functions as the Nucleophile in the catalytic mechanism. Mg(2+) contacts are provided by Asp13, Asp15, and Asp176.

It belongs to the HAD-like hydrolase superfamily. CbbY/CbbZ/Gph/YieH family. Mg(2+) serves as cofactor.

The catalysed reaction is 2-phosphoglycolate + H2O = glycolate + phosphate. The protein operates within organic acid metabolism; glycolate biosynthesis; glycolate from 2-phosphoglycolate: step 1/1. In terms of biological role, specifically catalyzes the dephosphorylation of 2-phosphoglycolate. Is involved in the dissimilation of the intracellular 2-phosphoglycolate formed during the DNA repair of 3'-phosphoglycolate ends, a major class of DNA lesions induced by oxidative stress. This chain is Phosphoglycolate phosphatase, found in Nitrosospira multiformis (strain ATCC 25196 / NCIMB 11849 / C 71).